A 118-amino-acid polypeptide reads, in one-letter code: Ribosome-binding factor A (118 aa).

The protein belongs to the RbfA family. In terms of assembly, monomer. Binds 30S ribosomal subunits, but not 50S ribosomal subunits or 70S ribosomes.

It localises to the cytoplasm. One of several proteins that assist in the late maturation steps of the functional core of the 30S ribosomal subunit. Associates with free 30S ribosomal subunits (but not with 30S subunits that are part of 70S ribosomes or polysomes). Required for efficient processing of 16S rRNA. May interact with the 5'-terminal helix region of 16S rRNA. This Bacillus cereus (strain B4264) protein is Ribosome-binding factor A.